Here is a 151-residue protein sequence, read N- to C-terminus: UPF0178 protein Pfl01_5469 (151 aa).

It belongs to the UPF0178 family.

The polypeptide is UPF0178 protein Pfl01_5469 (Pseudomonas fluorescens (strain Pf0-1)).